Reading from the N-terminus, the 241-residue chain is 1-(5-phosphoribosyl)-5-[(5-phosphoribosylamino)methylideneamino] imidazole-4-carboxamide isomerase (241 aa).

D8 acts as the Proton acceptor in catalysis. Residue D129 is the Proton donor of the active site.

This sequence belongs to the HisA/HisF family.

The protein resides in the cytoplasm. It catalyses the reaction 1-(5-phospho-beta-D-ribosyl)-5-[(5-phospho-beta-D-ribosylamino)methylideneamino]imidazole-4-carboxamide = 5-[(5-phospho-1-deoxy-D-ribulos-1-ylimino)methylamino]-1-(5-phospho-beta-D-ribosyl)imidazole-4-carboxamide. It participates in amino-acid biosynthesis; L-histidine biosynthesis; L-histidine from 5-phospho-alpha-D-ribose 1-diphosphate: step 4/9. The polypeptide is 1-(5-phosphoribosyl)-5-[(5-phosphoribosylamino)methylideneamino] imidazole-4-carboxamide isomerase (Chloroflexus aggregans (strain MD-66 / DSM 9485)).